The chain runs to 383 residues: S-adenosylmethionine synthase (383 aa).

Residue His15 participates in ATP binding. Asp17 is a binding site for Mg(2+). A K(+)-binding site is contributed by Glu43. L-methionine-binding residues include Glu56 and Gln99. Residues 99–109 (QSPDINQGVDR) form a flexible loop region. Residues 164-166 (DAK), 230-231 (RF), Asp239, 245-246 (RK), Ala262, and Lys266 each bind ATP. An L-methionine-binding site is contributed by Asp239. L-methionine is bound at residue Lys270.

It belongs to the AdoMet synthase family. In terms of assembly, homotetramer; dimer of dimers. It depends on Mg(2+) as a cofactor. K(+) is required as a cofactor.

The protein localises to the cytoplasm. The enzyme catalyses L-methionine + ATP + H2O = S-adenosyl-L-methionine + phosphate + diphosphate. The protein operates within amino-acid biosynthesis; S-adenosyl-L-methionine biosynthesis; S-adenosyl-L-methionine from L-methionine: step 1/1. Its function is as follows. Catalyzes the formation of S-adenosylmethionine (AdoMet) from methionine and ATP. The overall synthetic reaction is composed of two sequential steps, AdoMet formation and the subsequent tripolyphosphate hydrolysis which occurs prior to release of AdoMet from the enzyme. In Actinobacillus pleuropneumoniae serotype 7 (strain AP76), this protein is S-adenosylmethionine synthase.